A 207-amino-acid chain; its full sequence is ATP-dependent Clp protease proteolytic subunit 2 (207 aa).

Serine 102 (nucleophile) is an active-site residue. Histidine 127 is a catalytic residue.

This sequence belongs to the peptidase S14 family. As to quaternary structure, fourteen ClpP subunits assemble into 2 heptameric rings which stack back to back to give a disk-like structure with a central cavity, resembling the structure of eukaryotic proteasomes.

The protein localises to the cytoplasm. The enzyme catalyses Hydrolysis of proteins to small peptides in the presence of ATP and magnesium. alpha-casein is the usual test substrate. In the absence of ATP, only oligopeptides shorter than five residues are hydrolyzed (such as succinyl-Leu-Tyr-|-NHMec, and Leu-Tyr-Leu-|-Tyr-Trp, in which cleavage of the -Tyr-|-Leu- and -Tyr-|-Trp bonds also occurs).. Its function is as follows. Cleaves peptides in various proteins in a process that requires ATP hydrolysis. Has a chymotrypsin-like activity. Plays a major role in the degradation of misfolded proteins. The polypeptide is ATP-dependent Clp protease proteolytic subunit 2 (Bifidobacterium longum (strain NCC 2705)).